A 142-amino-acid chain; its full sequence is Large ribosomal subunit protein uL11 (142 aa).

The protein belongs to the universal ribosomal protein uL11 family. As to quaternary structure, part of the ribosomal stalk of the 50S ribosomal subunit. Interacts with L10 and the large rRNA to form the base of the stalk. L10 forms an elongated spine to which L12 dimers bind in a sequential fashion forming a multimeric L10(L12)X complex. One or more lysine residues are methylated.

Forms part of the ribosomal stalk which helps the ribosome interact with GTP-bound translation factors. This chain is Large ribosomal subunit protein uL11, found in Bartonella henselae (strain ATCC 49882 / DSM 28221 / CCUG 30454 / Houston 1) (Rochalimaea henselae).